The following is a 387-amino-acid chain: Lipid-A-disaccharide synthase (387 aa).

Belongs to the LpxB family.

The catalysed reaction is a lipid X + a UDP-2-N,3-O-bis[(3R)-3-hydroxyacyl]-alpha-D-glucosamine = a lipid A disaccharide + UDP + H(+). The protein operates within bacterial outer membrane biogenesis; LPS lipid A biosynthesis. Functionally, condensation of UDP-2,3-diacylglucosamine and 2,3-diacylglucosamine-1-phosphate to form lipid A disaccharide, a precursor of lipid A, a phosphorylated glycolipid that anchors the lipopolysaccharide to the outer membrane of the cell. The chain is Lipid-A-disaccharide synthase from Glaesserella parasuis serovar 5 (strain SH0165) (Haemophilus parasuis).